A 340-amino-acid polypeptide reads, in one-letter code: Probable sugar phosphate/phosphate translocator At3g14410 (340 aa).

The next 10 helical transmembrane spans lie at 12–32 (EFVTYAYILLYIALSSGQIFF), 44–64 (FPYPLGLTLLHMIFSSVLCFL), 80–100 (LEIYVTSVIPIGAMFAMTLWL), 110–130 (VAFAQMLKAIMPVAVFILGVA), 141–161 (LLIMSIISFGVLVASYGELNI), 163–183 (WIGVVYQMGGVVGEALRLIFM), 197–217 (ISLMYYVSPCSAICLFVPWIF), 234–254 (VVLTLNSLCTFALNLSVFLVI), 260–282 (LTIRVAGVVKDWVVVLVSALLFA), and 286–305 (LTIINLFGYAIAIAGVAAYN). The disordered stretch occupies residues 320-340 (ETPGDAESIPLVSQGNTNTER). Over residues 330–340 (LVSQGNTNTER) the composition is skewed to polar residues.

This sequence belongs to the TPT transporter family. TPT (TC 2.A.7.9) subfamily.

The protein resides in the membrane. The protein is Probable sugar phosphate/phosphate translocator At3g14410 of Arabidopsis thaliana (Mouse-ear cress).